The primary structure comprises 285 residues: Involucrin (285 aa).

Disordered regions lie at residues 1-93 (MSQQ…QEQK), 120-256 (LEQQ…AQVQ), and 266-285 (LPLI…PEHQ). Polar residues predominate over residues 27–39 (IDTQQEQVKQPTS). Low complexity-rich tracts occupy residues 72–87 (EQQC…QKQQ), 120–129 (LEQQQEQQES), and 137–147 (EQCLEQQQEQQ). Composition is skewed to basic and acidic residues over residues 149–165 (SQEK…KEEL), 175–185 (EQCEKHQEAKN), and 200–233 (QQKE…KEEQ). Over residues 235–248 (LEQQGQQEGQLEQP) the composition is skewed to low complexity. Positions 272–285 (QHQKQEVHDPPEHQ) are enriched in basic and acidic residues.

The protein belongs to the involucrin family. In terms of assembly, directly or indirectly cross-linked to cornifelin (CNFN). In terms of processing, substrate of transglutaminase. Specific glutamines or lysines are cross-linked to keratins, desmoplakin and to inter involucrin molecules. As to expression, keratinocytes of epidermis and other stratified squamous epithelia.

It is found in the cytoplasm. In terms of biological role, part of the insoluble cornified cell envelope (CE) of stratified squamous epithelia. In Canis lupus familiaris (Dog), this protein is Involucrin (IVL).